The chain runs to 726 residues: MDGNNVDPTGGCPVMHGGNTAMDKPVTKWWPNALNLDILHQHGARTNPMDPDYDHRAAVKALDFEAVKADVKALMTQDQDWWPADWGHYGGLMIRLAWHSAGTYRMQDGRGGAGSGNIRFAPLNSWPDNASLDKARRLLWPVKKKYGNALSWADLIILSGNMAYESMGLKTFGFGFGREDIWGPETDVYWGSENEWLAPSENRYGDLDDASTLENPLAAVHMGLIYVNPEGVNGQPDPARTAQHVRETFARMAMDDEETAALTCGGHTVGKAHGRGAVDNIGVEPEAAGIEAQGFGWSNPRHDGKATNAFTSGIEGAWTTHPTQWDMGYFKLLFGYEWQLTKSPAGAWQWEPIDIKEEDMPVDPTDPSKRHQPMMTDADMAMKVDPIYNEICQKFMADPEYFADVFGRAWFKLTHRDMGPKACYIGPDVPAEDLIWQDPIPAGSTEYDVAAVKARIADSGLSAADMIATAWDSARTFRGSDKRGGANGARIRLAPQKDWAGNEPERLAKVLGILEPIAAETGASVADVIVLAGNVGLEQSIKAAGYDVDVPFAQGRGDATADQTDAASFDVLEPLADGFRNWQKADYAVSAEEMMLDKAQLLGLTAAEMTVLVGGMRVLGVNHGNSKHGVFTDRAGQLTPDFFVNLTDMAYSWHPVDGENTYEIRDRATGAVKWTATSADLVFGSNSVLRAYAEVYAQDDNAEKFVRDFVAAWTKVMNADRFDLAA.

Positions 98–226 (WHSAGTYRMQ…LAAVHMGLIY (129 aa)) form a cross-link, tryptophyl-tyrosyl-methioninium (Trp-Tyr) (with M-252). Residue His-99 is the Proton acceptor of the active site. The tryptophyl-tyrosyl-methioninium (Tyr-Met) (with W-98) cross-link spans 226 to 252 (YVNPEGVNGQPDPARTAQHVRETFARM). His-267 contributes to the heme b binding site.

This sequence belongs to the peroxidase family. Peroxidase/catalase subfamily. Homodimer or homotetramer. The cofactor is heme b. In terms of processing, formation of the three residue Trp-Tyr-Met cross-link is important for the catalase, but not the peroxidase activity of the enzyme.

It catalyses the reaction H2O2 + AH2 = A + 2 H2O. It carries out the reaction 2 H2O2 = O2 + 2 H2O. In terms of biological role, bifunctional enzyme with both catalase and broad-spectrum peroxidase activity. This is Catalase-peroxidase from Roseobacter denitrificans (strain ATCC 33942 / OCh 114) (Erythrobacter sp. (strain OCh 114)).